A 202-amino-acid chain; its full sequence is Na(+)-translocating NADH-quinone reductase subunit E (202 aa).

Transmembrane regions (helical) follow at residues 11–31, 35–55, 79–99, 114–134, 144–164, and 180–200; these read AVFI…FIAI, VETA…TVPA, LSFL…QILE, GVFL…LFMV, VVYG…LAGI, and LGIT…FSGV.

Belongs to the NqrDE/RnfAE family. As to quaternary structure, composed of six subunits; NqrA, NqrB, NqrC, NqrD, NqrE and NqrF.

The protein resides in the cell inner membrane. It catalyses the reaction a ubiquinone + n Na(+)(in) + NADH + H(+) = a ubiquinol + n Na(+)(out) + NAD(+). Functionally, NQR complex catalyzes the reduction of ubiquinone-1 to ubiquinol by two successive reactions, coupled with the transport of Na(+) ions from the cytoplasm to the periplasm. NqrA to NqrE are probably involved in the second step, the conversion of ubisemiquinone to ubiquinol. In Stutzerimonas stutzeri (strain A1501) (Pseudomonas stutzeri), this protein is Na(+)-translocating NADH-quinone reductase subunit E.